Consider the following 288-residue polypeptide: Elongation factor Ts (288 aa).

The segment at 82–85 is involved in Mg(2+) ion dislocation from EF-Tu; sequence TDFV.

This sequence belongs to the EF-Ts family.

Its subcellular location is the cytoplasm. Its function is as follows. Associates with the EF-Tu.GDP complex and induces the exchange of GDP to GTP. It remains bound to the aminoacyl-tRNA.EF-Tu.GTP complex up to the GTP hydrolysis stage on the ribosome. This Chlorobaculum tepidum (strain ATCC 49652 / DSM 12025 / NBRC 103806 / TLS) (Chlorobium tepidum) protein is Elongation factor Ts.